Consider the following 1176-residue polypeptide: DNA-directed RNA polymerase subunit beta (1176 aa).

Residues 13–30 are compositionally biased toward polar residues; it reads TDASLHQGRPQSSSNSSV. The interval 13-35 is disordered; it reads TDASLHQGRPQSSSNSSVPGAPN.

The protein belongs to the RNA polymerase beta chain family. As to quaternary structure, the RNAP catalytic core consists of 2 alpha, 1 beta, 1 beta' and 1 omega subunit. When a sigma factor is associated with the core the holoenzyme is formed, which can initiate transcription.

It catalyses the reaction RNA(n) + a ribonucleoside 5'-triphosphate = RNA(n+1) + diphosphate. DNA-dependent RNA polymerase catalyzes the transcription of DNA into RNA using the four ribonucleoside triphosphates as substrates. This chain is DNA-directed RNA polymerase subunit beta, found in Mycobacterium ulcerans (strain Agy99).